Consider the following 541-residue polypeptide: Phosphoenolpyruvate carboxykinase (ATP) (541 aa).

Substrate contacts are provided by arginine 67, tyrosine 207, and lysine 213. Residues lysine 213, histidine 232, and 248–256 (GLSGTGKTT) each bind ATP. Mn(2+) contacts are provided by lysine 213 and histidine 232. Residue aspartate 269 coordinates Mn(2+). ATP is bound by residues glutamate 297, arginine 333, 449–450 (RI), and threonine 455. A substrate-binding site is contributed by arginine 333.

It belongs to the phosphoenolpyruvate carboxykinase (ATP) family. As to quaternary structure, monomer. Mn(2+) serves as cofactor.

Its subcellular location is the cytoplasm. It carries out the reaction oxaloacetate + ATP = phosphoenolpyruvate + ADP + CO2. The protein operates within carbohydrate biosynthesis; gluconeogenesis. Functionally, involved in the gluconeogenesis. Catalyzes the conversion of oxaloacetate (OAA) to phosphoenolpyruvate (PEP) through direct phosphoryl transfer between the nucleoside triphosphate and OAA. In Vibrio atlanticus (strain LGP32) (Vibrio splendidus (strain Mel32)), this protein is Phosphoenolpyruvate carboxykinase (ATP).